The following is a 310-amino-acid chain: HPr kinase/phosphorylase (310 aa).

Active-site residues include H136 and K157. Position 151 to 158 (151 to 158 (GDSGIGKS)) interacts with ATP. Mg(2+) is bound at residue S158. D175 (proton acceptor; for phosphorylation activity. Proton donor; for dephosphorylation activity) is an active-site residue. Residues 199–208 (LEIRGLGIIN) are important for the catalytic mechanism of both phosphorylation and dephosphorylation. Residue E200 participates in Mg(2+) binding. R241 is a catalytic residue. The segment at 262 to 267 (PVRPGR) is important for the catalytic mechanism of dephosphorylation.

This sequence belongs to the HPrK/P family. Homohexamer. Mg(2+) is required as a cofactor.

It carries out the reaction [HPr protein]-L-serine + ATP = [HPr protein]-O-phospho-L-serine + ADP + H(+). The enzyme catalyses [HPr protein]-O-phospho-L-serine + phosphate + H(+) = [HPr protein]-L-serine + diphosphate. Functionally, catalyzes the ATP- as well as the pyrophosphate-dependent phosphorylation of a specific serine residue in HPr, a phosphocarrier protein of the phosphoenolpyruvate-dependent sugar phosphotransferase system (PTS). HprK/P also catalyzes the pyrophosphate-producing, inorganic phosphate-dependent dephosphorylation (phosphorolysis) of seryl-phosphorylated HPr (P-Ser-HPr). The two antagonistic activities of HprK/P are regulated by several intracellular metabolites, which change their concentration in response to the absence or presence of rapidly metabolisable carbon sources (glucose, fructose, etc.) in the growth medium. Therefore, by controlling the phosphorylation state of HPr, HPrK/P is a sensor enzyme that plays a major role in the regulation of carbon metabolism and sugar transport: it mediates carbon catabolite repression (CCR), and regulates PTS-catalyzed carbohydrate uptake and inducer exclusion. This is HPr kinase/phosphorylase from Staphylococcus aureus (strain Mu3 / ATCC 700698).